The sequence spans 348 residues: GMP reductase 2 (348 aa).

NADP(+) is bound by residues 26–27 (SR), Lys-78, 129–131 (DVA), and 180–181 (IG). K(+) is bound by residues Gly-181, Gly-183, and Cys-186. Residue Cys-186 is the Thioimidate intermediate of the active site. The active-site Proton donor/acceptor is Thr-188. A K(+)-binding site is contributed by Arg-189. Residues 219–221 (DGG), 242–243 (GG), 268–270 (GMS), and 286–290 (RASEG) contribute to the GMP site. NADP(+) is bound by residues Met-269 and 285 to 286 (YR). Lys-291 is subject to N6-acetyllysine. Residue 314-317 (STCT) coordinates NADP(+).

The protein belongs to the IMPDH/GMPR family. GuaC type 1 subfamily. Homotetramer. Highly expressed in heart, skeletal muscle, kidney, brain, liver, prostate, spleen, placenta, testis and ovary. Low expression in colon, thymus and peripheral blood leukocytes.

The catalysed reaction is IMP + NH4(+) + NADP(+) = GMP + NADPH + 2 H(+). In terms of biological role, catalyzes the irreversible NADPH-dependent deamination of GMP to IMP. It functions in the conversion of nucleobase, nucleoside and nucleotide derivatives of G to A nucleotides, and in maintaining the intracellular balance of A and G nucleotides. Plays a role in modulating cellular differentiation. The polypeptide is GMP reductase 2 (Homo sapiens (Human)).